Consider the following 225-residue polypeptide: Ribonuclease 3 (225 aa).

Residues 4-127 (IEKLEQSLTY…IIGAIHLEAG (124 aa)) form the RNase III domain. Glu40 is a Mg(2+) binding site. The active site involves Asp44. Asp113 and Glu116 together coordinate Mg(2+). Residue Glu116 is part of the active site. In terms of domain architecture, DRBM spans 154 to 223 (DYKTKLQEIT…AKIALEKLGS (70 aa)).

Belongs to the ribonuclease III family. Homodimer. Requires Mg(2+) as cofactor.

Its subcellular location is the cytoplasm. The enzyme catalyses Endonucleolytic cleavage to 5'-phosphomonoester.. Its function is as follows. Digests double-stranded RNA. Involved in the processing of primary rRNA transcript to yield the immediate precursors to the large and small rRNAs (23S and 16S). Processes some mRNAs, and tRNAs when they are encoded in the rRNA operon. Processes pre-crRNA and tracrRNA of type II CRISPR loci if present in the organism. The protein is Ribonuclease 3 of Campylobacter jejuni subsp. doylei (strain ATCC BAA-1458 / RM4099 / 269.97).